We begin with the raw amino-acid sequence, 96 residues long: (4S)-4-hydroxy-5-phosphonooxypentane-2,3-dione isomerase (96 aa).

The ABM domain maps to 2–91 (HVTLVEINVH…MTGPRKKRLF (90 aa)).

The protein belongs to the LsrG family. Homodimer.

The protein resides in the cytoplasm. The catalysed reaction is (2S)-2-hydroxy-3,4-dioxopentyl phosphate = 3-hydroxy-2,4-dioxopentyl phosphate. Involved in the degradation of phospho-AI-2, thereby terminating induction of the lsr operon and closing the AI-2 signaling cycle. Catalyzes the conversion of (4S)-4-hydroxy-5-phosphonooxypentane-2,3-dione (P-DPD) to 3-hydroxy-5-phosphonooxypentane-2,4-dione (P-HPD). In Escherichia coli O157:H7, this protein is (4S)-4-hydroxy-5-phosphonooxypentane-2,3-dione isomerase.